Reading from the N-terminus, the 297-residue chain is MQIKIKSKEKYLIGVSGGSDSMFLLNKYKNQDVIVAHINYNLRPEAIFETLLVSKFCQKYNLELKILSFDSFKIKKNLQSGLRLGRYQFFEKIYKEFNCTKLLVGHHRDDFLETVFLQKKQKKIVTFWGIHKKNNLFNMEILRPFLYWRTKKQIIRICQQKKIPYLDDQSNFTGKYQRNQIRFLLEKKSDFSLFFLFLFYYLINIFKLIILKNQKKILQNWQKTGYNINFFKKIKIKSKIIFLFVNQNFDNVKLTRGKINEIINFICGKSTSGAFLLKKNNYIIKKKWKILPKSSKI.

Ser16–Ser21 contacts ATP.

It belongs to the tRNA(Ile)-lysidine synthase family.

The protein resides in the cytoplasm. It catalyses the reaction cytidine(34) in tRNA(Ile2) + L-lysine + ATP = lysidine(34) in tRNA(Ile2) + AMP + diphosphate + H(+). Its function is as follows. Ligates lysine onto the cytidine present at position 34 of the AUA codon-specific tRNA(Ile) that contains the anticodon CAU, in an ATP-dependent manner. Cytidine is converted to lysidine, thus changing the amino acid specificity of the tRNA from methionine to isoleucine. The protein is tRNA(Ile)-lysidine synthase of Mesomycoplasma hyopneumoniae (strain 232) (Mycoplasma hyopneumoniae).